The chain runs to 937 residues: Isoleucine--tRNA ligase (937 aa).

Positions 58–68 match the 'HIGH' region motif; it reads PYANGSIHIGH. Glutamate 561 provides a ligand contact to L-isoleucyl-5'-AMP. The 'KMSKS' region motif lies at 602-606; sequence KMSKS. Lysine 605 lines the ATP pocket. Residues cysteine 900, cysteine 903, cysteine 920, and cysteine 923 each contribute to the Zn(2+) site.

This sequence belongs to the class-I aminoacyl-tRNA synthetase family. IleS type 1 subfamily. In terms of assembly, monomer. Zn(2+) serves as cofactor.

It is found in the cytoplasm. It catalyses the reaction tRNA(Ile) + L-isoleucine + ATP = L-isoleucyl-tRNA(Ile) + AMP + diphosphate. Catalyzes the attachment of isoleucine to tRNA(Ile). As IleRS can inadvertently accommodate and process structurally similar amino acids such as valine, to avoid such errors it has two additional distinct tRNA(Ile)-dependent editing activities. One activity is designated as 'pretransfer' editing and involves the hydrolysis of activated Val-AMP. The other activity is designated 'posttransfer' editing and involves deacylation of mischarged Val-tRNA(Ile). The sequence is that of Isoleucine--tRNA ligase from Pectobacterium atrosepticum (strain SCRI 1043 / ATCC BAA-672) (Erwinia carotovora subsp. atroseptica).